We begin with the raw amino-acid sequence, 151 residues long: Large ribosomal subunit protein bL9 (151 aa).

The protein belongs to the bacterial ribosomal protein bL9 family.

Its function is as follows. Binds to the 23S rRNA. This chain is Large ribosomal subunit protein bL9, found in Lactobacillus helveticus (strain DPC 4571).